Here is a 165-residue protein sequence, read N- to C-terminus: Large ribosomal subunit protein uL10 (165 aa).

Belongs to the universal ribosomal protein uL10 family. Part of the ribosomal stalk of the 50S ribosomal subunit. The N-terminus interacts with L11 and the large rRNA to form the base of the stalk. The C-terminus forms an elongated spine to which L12 dimers bind in a sequential fashion forming a multimeric L10(L12)X complex.

Its function is as follows. Forms part of the ribosomal stalk, playing a central role in the interaction of the ribosome with GTP-bound translation factors. The chain is Large ribosomal subunit protein uL10 from Mycoplasma capricolum subsp. capricolum (strain California kid / ATCC 27343 / NCTC 10154).